The following is a 239-amino-acid chain: Sugar fermentation stimulation protein homolog (239 aa).

It belongs to the SfsA family.

This Maridesulfovibrio salexigens (strain ATCC 14822 / DSM 2638 / NCIMB 8403 / VKM B-1763) (Desulfovibrio salexigens) protein is Sugar fermentation stimulation protein homolog.